The sequence spans 396 residues: Cyclic GMP-AMP synthase-like receptor (396 aa).

ATP contacts are provided by residues S63 and 75-77 (EFD). Residues E75, D77, and D194 each coordinate Mg(2+). D194 contributes to the GTP binding site. ATP-binding positions include 241–244 (QEQE), K262, and 275–279 (SYYLK). Mn(2+) contacts are provided by V286, E287, and D292. The segment at 376–396 (IMNGGNPQQSANAENGSCLSM) is disordered. A compositionally biased stretch (polar residues) spans 380 to 396 (GNPQQSANAENGSCLSM).

It belongs to the mab-21 family. Mg(2+) is required as a cofactor. The cofactor is Mn(2+).

It carries out the reaction GTP + ATP = 2',3'-cGAMP + 2 diphosphate. It catalyses the reaction GTP + ATP = pppGp(2'-5')A + diphosphate. The catalysed reaction is pppGp(2'-5')A = 2',3'-cGAMP + diphosphate. Nucleotidyltransferase that catalyzes the formation of cyclic GMP-AMP (2',3'-cGAMP) from ATP and GTP and plays a key role in innate immunity. Acts as a key sensor of double-stranded RNA (dsRNA), the presence of dsRNA in the cytoplasm being a danger signal that triggers the immune responses. Directly binds dsRNA, activating the nucleotidyltransferase activity, leading to synthesis of 2',3'-cGAMP, a second messenger that binds to and activates Sting, thereby triggering the immune response via activation of the NF-kappa-B transcription factor. In Aethina tumida (Small hive beetle), this protein is Cyclic GMP-AMP synthase-like receptor.